A 305-amino-acid chain; its full sequence is Plant-type L-asparaginase (305 aa).

Threonine 175 functions as the Nucleophile in the catalytic mechanism. Substrate contacts are provided by residues 202–205 and 224–227; these read RVGD and TGLG.

It belongs to the Ntn-hydrolase family. Heterotetramer of two alpha and two beta chains arranged as a dimer of alpha/beta heterodimers. The uncleaved protein forms homodimers. In terms of processing, autocleaved. Generates the alpha and beta subunits. The N-terminal residue of the beta subunit is thought to be responsible for the nucleophile hydrolase activity.

The catalysed reaction is L-asparagine + H2O = L-aspartate + NH4(+). Functionally, catalyzes the hydrolysis of L-asparagine into L-aspartate and ammonia. Does not exhibit glutaminase activity. This chain is Plant-type L-asparaginase, found in Pyrococcus abyssi (strain GE5 / Orsay).